The sequence spans 464 residues: tRNA modification GTPase MnmE (464 aa).

(6S)-5-formyl-5,6,7,8-tetrahydrofolate contacts are provided by R25, E87, and K130. Positions 226-386 (GLSVVLAGQP…LREELLRIAG (161 aa)) constitute a TrmE-type G domain. N236 is a binding site for K(+). Residues 236–241 (NVGKSS), 255–261 (TPIAGTT), and 280–283 (DTAG) each bind GTP. S240 provides a ligand contact to Mg(2+). K(+) is bound by residues T255, I257, and T260. A Mg(2+)-binding site is contributed by T261. (6S)-5-formyl-5,6,7,8-tetrahydrofolate is bound at residue K464.

The protein belongs to the TRAFAC class TrmE-Era-EngA-EngB-Septin-like GTPase superfamily. TrmE GTPase family. Homodimer. Heterotetramer of two MnmE and two MnmG subunits. The cofactor is K(+).

Its subcellular location is the cytoplasm. Its function is as follows. Exhibits a very high intrinsic GTPase hydrolysis rate. Involved in the addition of a carboxymethylaminomethyl (cmnm) group at the wobble position (U34) of certain tRNAs, forming tRNA-cmnm(5)s(2)U34. The protein is tRNA modification GTPase MnmE of Paraburkholderia xenovorans (strain LB400).